A 61-amino-acid chain; its full sequence is Adipokinetic prohormone type 2 (61 aa).

The signal sequence occupies residues 1-22 (MTQSCTLTLVLVVAVLAALATA). Gln-23 carries the pyrrolidone carboxylic acid modification. Tryptophan amide is present on Trp-30.

Belongs to the AKH/HRTH/RPCH family. As to quaternary structure, adipokinetic hormone precursor-related peptide (APRP) can form three type of disulfide-bond dimers: p1 (alpha-alpha), p2 (alpha-beta), and p3 (beta-beta).

It localises to the secreted. Its function is as follows. This hormone, released from cells in the corpora cardiaca, causes release of diglycerides from the fat body and stimulation of muscles to use these diglycerides as an energy source during energy-demanding processes. This Locusta migratoria (Migratory locust) protein is Adipokinetic prohormone type 2.